Here is a 178-residue protein sequence, read N- to C-terminus: Histone deacetylase complex subunit SAP30L (178 aa).

Disulfide bonds link Cys-24-Cys-25 and Cys-33-Cys-69. The Atypical zinc finger occupies 24-72 (CCLIEDAERCGRPAGNASFSKRIQKSISQRKLKLDIDKSVRHLYICDFH). A disordered region spans residues 80 to 99 (RNKRKRKTSDDGGESPDHEV). The Nuclear localization signal (NLS) signature appears at 81–86 (NKRKRK). Residues 83–85 (RKR) are important for DNA and phosphoinositide binding.

It belongs to the SAP30 family. In terms of assembly, interacts with components of the histone deacetylase complex sin3a, hdac1 and hdac2. Binds histones and nucleosomes. As to expression, detected in embryos at 2dpf (at protein level). Widely expressed during embryogenesis and in adults.

It localises to the nucleus. The protein resides in the nucleolus. In terms of biological role, functions as a transcription repressor, probably via its interaction with histone deacetylase complexes. Required for normal expression of numerous target genes. Involved in the functional recruitment of the class 1 Sin3-histone deacetylase complex (HDAC) to the nucleolus. Binds DNA, apparently without sequence-specificity, and bends bound double-stranded DNA. Binds phosphoinositol phosphates (phosphoinositol 3-phosphate, phosphoinositol 4-phosphate and phosphoinositol 5-phosphate) via the same basic sequence motif that mediates DNA binding and nuclear import. This chain is Histone deacetylase complex subunit SAP30L (sap30l), found in Danio rerio (Zebrafish).